A 664-amino-acid chain; its full sequence is Putative carboxypeptidase suro-1 (664 aa).

An N-terminal signal peptide occupies residues Met1 to Cys23. A propeptide spans Ser24–Ile110 (activation peptide). In terms of domain architecture, Peptidase M14 spans Asp160–Val473. Zn(2+)-binding residues include His219 and Glu222. Substrate-binding positions include His219–Glu222, Arg281, and Asn306–Arg307. His361 lines the Zn(2+) pocket. Ser362 to Tyr363 contacts substrate. Catalysis depends on Glu437, which acts as the Proton donor/acceptor. Residues Ala512–Ser543 are compositionally biased toward low complexity. Residues Ala512 to Thr590 are disordered. Pro residues predominate over residues Pro564 to Met573. The segment covering Ser574–Thr583 has biased composition (low complexity). Positions Cys621 to Cys657 constitute a ShKT domain. 3 cysteine pairs are disulfide-bonded: Cys621/Cys657, Cys628/Cys650, and Cys639/Cys654.

Belongs to the peptidase M14 family. Zn(2+) is required as a cofactor. As to expression, localizes in stripes along the cuticle.

It is found in the cytoplasmic vesicle. The protein localises to the secreted. Its function is as follows. May play a role in processing or organization of cuticle collagen proteins, including rol-6 and col-19. The sequence is that of Putative carboxypeptidase suro-1 from Caenorhabditis elegans.